The primary structure comprises 319 residues: Ankyrin repeat domain-containing protein 1 (319 aa).

Residues 63 to 89 (EKQLEAELKKKKLEQRSKLENLEDLEI) adopt a coiled-coil conformation. ANK repeat units lie at residues 152 to 181 (YKRT…QIEF), 185 to 214 (LEST…KISA), 218 to 247 (LLST…DLNA), 251 to 280 (EGDT…DLTI), and 284 to 315 (AGKT…KTSR).

As to quaternary structure, interacts with TTN/titin and YBX1.

The protein resides in the nucleus. Its function is as follows. May play an important role in endothelial cell activation. May act as a nuclear transcription factor that negatively regulates the expression of cardiac genes. The protein is Ankyrin repeat domain-containing protein 1 (ANKRD1) of Oryctolagus cuniculus (Rabbit).